A 428-amino-acid chain; its full sequence is Adenylosuccinate synthetase (428 aa).

Residues 12–18 and 40–42 each bind GTP; these read GDEGKGK and GHT. Asp13 (proton acceptor) is an active-site residue. Residues Asp13 and Gly40 each coordinate Mg(2+). IMP is bound by residues 13–16, 38–41, Thr129, Arg143, Gln224, Thr239, and Arg303; these read DEGK and NAGH. His41 serves as the catalytic Proton donor. 299–305 serves as a coordination point for substrate; that stretch reads VTTGRIR. GTP is bound by residues Arg305, 331 to 333, and 410 to 412; these read KVD and AYG.

This sequence belongs to the adenylosuccinate synthetase family. As to quaternary structure, homodimer. It depends on Mg(2+) as a cofactor.

It is found in the cytoplasm. It catalyses the reaction IMP + L-aspartate + GTP = N(6)-(1,2-dicarboxyethyl)-AMP + GDP + phosphate + 2 H(+). Its pathway is purine metabolism; AMP biosynthesis via de novo pathway; AMP from IMP: step 1/2. In terms of biological role, plays an important role in the de novo pathway of purine nucleotide biosynthesis. Catalyzes the first committed step in the biosynthesis of AMP from IMP. This Francisella tularensis subsp. holarctica (strain FTNF002-00 / FTA) protein is Adenylosuccinate synthetase.